A 25-amino-acid polypeptide reads, in one-letter code: Caerin-1.10 (25 aa).

Leu25 is modified (leucine amide).

The protein belongs to the frog skin active peptide (FSAP) family. Caerin subfamily. In terms of tissue distribution, expressed by the skin dorsal glands.

The protein resides in the secreted. Functionally, antibacterial peptide with wide spectrum of activity. The protein is Caerin-1.10 of Litoria rothii (Roth's tree frog).